Here is a 119-residue protein sequence, read N- to C-terminus: Large ribosomal subunit protein bL20 (119 aa).

Belongs to the bacterial ribosomal protein bL20 family.

Functionally, binds directly to 23S ribosomal RNA and is necessary for the in vitro assembly process of the 50S ribosomal subunit. It is not involved in the protein synthesizing functions of that subunit. The polypeptide is Large ribosomal subunit protein bL20 (Streptococcus thermophilus (strain ATCC BAA-491 / LMD-9)).